The following is a 401-amino-acid chain: Elongation factor Tu 1 (401 aa).

In terms of domain architecture, tr-type G spans 10–209; it reads KPHVNVGTIG…AVDEYIPTPV (200 aa). Residues 19-26 form a G1 region; sequence GHVDHGKT. Position 19–26 (19–26) interacts with GTP; that stretch reads GHVDHGKT. Thr-26 serves as a coordination point for Mg(2+). Positions 60–64 are G2; it reads GITIA. Positions 81-84 are G3; it reads DCPG. GTP is bound by residues 81-85 and 136-139; these read DCPGH and NKVD. Residues 136-139 are G4; it reads NKVD. The interval 174–176 is G5; it reads SAL.

The protein belongs to the TRAFAC class translation factor GTPase superfamily. Classic translation factor GTPase family. EF-Tu/EF-1A subfamily. As to quaternary structure, monomer.

The protein resides in the cytoplasm. The enzyme catalyses GTP + H2O = GDP + phosphate + H(+). Its function is as follows. GTP hydrolase that promotes the GTP-dependent binding of aminoacyl-tRNA to the A-site of ribosomes during protein biosynthesis. The protein is Elongation factor Tu 1 of Roseiflexus castenholzii (strain DSM 13941 / HLO8).